We begin with the raw amino-acid sequence, 519 residues long: Histidine ammonia-lyase (519 aa).

Residues 146–148 constitute a cross-link (5-imidazolinone (Ala-Gly)); that stretch reads ASG. S147 carries the post-translational modification 2,3-didehydroalanine (Ser).

The protein belongs to the PAL/histidase family. In terms of processing, contains an active site 4-methylidene-imidazol-5-one (MIO), which is formed autocatalytically by cyclization and dehydration of residues Ala-Ser-Gly.

It is found in the cytoplasm. The catalysed reaction is L-histidine = trans-urocanate + NH4(+). It participates in amino-acid degradation; L-histidine degradation into L-glutamate; N-formimidoyl-L-glutamate from L-histidine: step 1/3. This chain is Histidine ammonia-lyase, found in Bradyrhizobium diazoefficiens (strain JCM 10833 / BCRC 13528 / IAM 13628 / NBRC 14792 / USDA 110).